A 182-amino-acid polypeptide reads, in one-letter code: UPF0690 protein C1orf52 (182 aa).

Disordered regions lie at residues 1-67 (MAAE…RSVT) and 100-182 (WKSN…KKKK). A compositionally biased stretch (acidic residues) spans 23 to 32 (SDEEDNIEPE). The segment covering 50–63 (NKAEKRLPGPDELF) has biased composition (basic and acidic residues). Position 67 is a phosphothreonine (Thr67). Phosphotyrosine is present on Tyr132. Residues 151 to 162 (EGEETLESDDEK) show a composition bias toward acidic residues. Ser158 is modified (phosphoserine). Over residues 172–182 (VEPGEPAKKKK) the composition is skewed to basic and acidic residues.

It belongs to the UPF0690 family. As to expression, expressed in all tissues tested including heart, placenta, liver, skeletal muscle, kidney and pancreas. Weak expression in brain and lung.

This chain is UPF0690 protein C1orf52 (C1orf52), found in Homo sapiens (Human).